A 508-amino-acid chain; its full sequence is Steroid 17-alpha-hydroxylase/17,20 lyase (508 aa).

Cys442 provides a ligand contact to heme.

The protein belongs to the cytochrome P450 family. Requires heme as cofactor.

It localises to the endoplasmic reticulum membrane. It is found in the microsome membrane. The enzyme catalyses a C21-steroid + reduced [NADPH--hemoprotein reductase] + O2 = a 17alpha-hydroxy-C21-steroid + oxidized [NADPH--hemoprotein reductase] + H2O + H(+). It catalyses the reaction progesterone + reduced [NADPH--hemoprotein reductase] + O2 = 17alpha-hydroxyprogesterone + oxidized [NADPH--hemoprotein reductase] + H2O + H(+). It carries out the reaction pregnenolone + reduced [NADPH--hemoprotein reductase] + O2 = 17alpha-hydroxypregnenolone + oxidized [NADPH--hemoprotein reductase] + H2O + H(+). The catalysed reaction is 17alpha-hydroxyprogesterone + reduced [NADPH--hemoprotein reductase] + O2 = androst-4-ene-3,17-dione + acetate + oxidized [NADPH--hemoprotein reductase] + H2O + 2 H(+). The enzyme catalyses 17alpha-hydroxyprogesterone + reduced [NADPH--hemoprotein reductase] + O2 = 16alpha,17alpha-dihydroxyprogesterone + oxidized [NADPH--hemoprotein reductase] + H2O + H(+). It catalyses the reaction 16alpha,17alpha-dihydroxyprogesterone + reduced [NADPH--hemoprotein reductase] + O2 = 6beta,16alpha,17alpha-trihydroxyprogesterone + oxidized [NADPH--hemoprotein reductase] + H2O + H(+). It carries out the reaction 17alpha-hydroxypregnenolone + reduced [NADPH--hemoprotein reductase] + O2 = 3beta-hydroxyandrost-5-en-17-one + acetate + oxidized [NADPH--hemoprotein reductase] + H2O + 2 H(+). The catalysed reaction is 16alpha,17alpha-dihydroxypregnenolone + reduced [NADPH--hemoprotein reductase] + O2 = 3beta,16alpha-dihydroxy-androst-5-en-17-one + acetate + oxidized [NADPH--hemoprotein reductase] + H2O + 2 H(+). The enzyme catalyses 3beta-hydroxyandrost-5-en-17-one + reduced [NADPH--hemoprotein reductase] + O2 = 3beta,16alpha-dihydroxy-androst-5-en-17-one + oxidized [NADPH--hemoprotein reductase] + H2O + H(+). It catalyses the reaction androst-4-ene-3,17-dione + reduced [NADPH--hemoprotein reductase] + O2 = 16alpha-hydroxyandrost-4-ene-3,17-dione + oxidized [NADPH--hemoprotein reductase] + H2O + H(+). It participates in steroid hormone biosynthesis. The protein operates within steroid biosynthesis; glucocorticoid biosynthesis. Regulated predominantly by intracellular cAMP levels. The 17,20-lyase activity is stimulated by cytochrome b5, which acts as an allosteric effector increasing the Vmax of the lyase activity. A cytochrome P450 monooxygenase involved in corticoid and androgen biosynthesis. Catalyzes 17-alpha hydroxylation of C21 steroids, which is common for both pathways. A second oxidative step, required only for androgen synthesis, involves an acyl-carbon cleavage. The 17-alpha hydroxy intermediates, as part of adrenal glucocorticoids biosynthesis pathway, are precursors of cortisol. Hydroxylates steroid hormones, pregnenolone and progesterone to form 17-alpha hydroxy metabolites, followed by the cleavage of the C17-C20 bond to form C19 steroids, dehydroepiandrosterone (DHEA) and androstenedione. Has 16-alpha hydroxylase activity. Catalyzes 16-alpha hydroxylation of 17-alpha hydroxy pregnenolone, followed by the cleavage of the C17-C20 bond to form 16-alpha-hydroxy DHEA. Also 16-alpha hydroxylates androgens, relevant for estriol synthesis. Mechanistically, uses molecular oxygen inserting one oxygen atom into a substrate, and reducing the second into a water molecule, with two electrons provided by NADPH via cytochrome P450 reductase (CPR; NADPH-ferrihemoprotein reductase). The protein is Steroid 17-alpha-hydroxylase/17,20 lyase (CYP17A1) of Cavia porcellus (Guinea pig).